A 103-amino-acid chain; its full sequence is Large ribosomal subunit protein eL14 (103 aa).

It belongs to the eukaryotic ribosomal protein eL14 family.

This chain is Large ribosomal subunit protein eL14, found in Pyrobaculum calidifontis (strain DSM 21063 / JCM 11548 / VA1).